A 306-amino-acid chain; its full sequence is uncharacterized protein (306 aa).

This is an uncharacterized protein from Escherichia coli (strain K12).